Consider the following 280-residue polypeptide: Myelin proteolipid protein A (280 aa).

Residues methionine 1–cysteine 10 lie on the Cytoplasmic side of the membrane. Residues cysteine 7 and cysteine 10 are each lipidated (S-palmitoyl cysteine). The helical transmembrane segment at methionine 11–glycine 36 threads the bilayer. Topologically, residues histidine 37–glutamate 59 are extracellular. Residues tyrosine 60–alanine 88 traverse the membrane as a helical segment. Residues glutamate 89–lysine 152 are Cytoplasmic-facing. 2 S-palmitoyl cysteine lipidation sites follow: cysteine 140 and cysteine 142. Residues phenylalanine 153 to phenylalanine 179 traverse the membrane as a helical segment. Topologically, residues asparagine 180–histidine 239 are extracellular. 2 disulfide bridges follow: cysteine 185–cysteine 229 and cysteine 202–cysteine 221. A helical transmembrane segment spans residues leucine 240 to leucine 269. The Cytoplasmic portion of the chain corresponds to arginine 270–phenylalanine 280.

This sequence belongs to the myelin proteolipid protein family.

The protein resides in the cell membrane. In terms of biological role, this is the major myelin protein from the central nervous system. It plays an important role in the formation or maintenance of the multilamellar structure of myelin. This chain is Myelin proteolipid protein A (plp1-a), found in Xenopus laevis (African clawed frog).